The following is a 277-amino-acid chain: Proteasome assembly chaperone 1 (277 aa).

This sequence belongs to the PSMG1 family. As to quaternary structure, forms a heterodimer with psmg2. Degraded by the proteasome upon completion of 20S proteasome maturation.

The protein localises to the cytoplasm. It localises to the endoplasmic reticulum. Its function is as follows. Chaperone protein which promotes assembly of the 20S proteasome as part of a heterodimer with psmg2. The protein is Proteasome assembly chaperone 1 of Danio rerio (Zebrafish).